The following is a 161-amino-acid chain: Afimbrial adhesin AFA-I (161 aa).

The signal sequence occupies residues 1–21; it reads MKKLAIIGATSVMMMTGTAQA.

The protein belongs to the Dr-adhesin family.

The protein localises to the fimbrium. Functionally, hemagglutinins of uropathogenic E.coli mediate adherence to the upper urinary tract. These adhesins bind to the Dr blood group antigen and also agglutinate human erythrocytes in the presence of D-mannose (mannose-resistant hemagglutination (MRHA)). This chain is Afimbrial adhesin AFA-I (afaE1), found in Escherichia coli.